Here is a 375-residue protein sequence, read N- to C-terminus: Succinyl-diaminopimelate desuccinylase (375 aa).

His-66 contributes to the Zn(2+) binding site. Residue Asp-68 is part of the active site. Asp-99 lines the Zn(2+) pocket. Residue Glu-133 is the Proton acceptor of the active site. Zn(2+)-binding residues include Glu-134, Glu-162, and His-348.

Belongs to the peptidase M20A family. DapE subfamily. In terms of assembly, homodimer. Requires Zn(2+) as cofactor. Co(2+) serves as cofactor.

The enzyme catalyses N-succinyl-(2S,6S)-2,6-diaminopimelate + H2O = (2S,6S)-2,6-diaminopimelate + succinate. The protein operates within amino-acid biosynthesis; L-lysine biosynthesis via DAP pathway; LL-2,6-diaminopimelate from (S)-tetrahydrodipicolinate (succinylase route): step 3/3. Its function is as follows. Catalyzes the hydrolysis of N-succinyl-L,L-diaminopimelic acid (SDAP), forming succinate and LL-2,6-diaminopimelate (DAP), an intermediate involved in the bacterial biosynthesis of lysine and meso-diaminopimelic acid, an essential component of bacterial cell walls. The polypeptide is Succinyl-diaminopimelate desuccinylase (Klebsiella pneumoniae (strain 342)).